The sequence spans 256 residues: GDSL esterase/lipase CPRD49 (256 aa).

Residues 1–27 form the signal peptide; sequence MVGPARPQIVLFGSSIVQMSFGHGGWG. Catalysis depends on Ser-15, which acts as the Nucleophile. Residues Asn-49 and Asn-79 are each glycosylated (N-linked (GlcNAc...) asparagine). His-213 is a catalytic residue. An N-linked (GlcNAc...) asparagine glycan is attached at Asn-243.

The protein belongs to the 'GDSL' lipolytic enzyme family. In terms of tissue distribution, specifically expressed in anthers (stages 8-12).

It localises to the secreted. The protein is GDSL esterase/lipase CPRD49 (CPRD49) of Arabidopsis thaliana (Mouse-ear cress).